Here is a 131-residue protein sequence, read N- to C-terminus: ATP synthase epsilon chain, chloroplastic (131 aa).

This sequence belongs to the ATPase epsilon chain family. In terms of assembly, F-type ATPases have 2 components, CF(1) - the catalytic core - and CF(0) - the membrane proton channel. CF(1) has five subunits: alpha(3), beta(3), gamma(1), delta(1), epsilon(1). CF(0) has three main subunits: a, b and c.

It localises to the plastid. Its subcellular location is the chloroplast thylakoid membrane. Functionally, produces ATP from ADP in the presence of a proton gradient across the membrane. This Cyanidioschyzon merolae (strain NIES-3377 / 10D) (Unicellular red alga) protein is ATP synthase epsilon chain, chloroplastic.